Consider the following 338-residue polypeptide: 1-aminocyclopropane-1-carboxylate deaminase (338 aa).

At Lys51 the chain carries N6-(pyridoxal phosphate)lysine. Ser78 (nucleophile) is an active-site residue.

It belongs to the ACC deaminase/D-cysteine desulfhydrase family. In terms of assembly, homotrimer. Pyridoxal 5'-phosphate serves as cofactor.

It catalyses the reaction 1-aminocyclopropane-1-carboxylate + H2O = 2-oxobutanoate + NH4(+). In terms of biological role, catalyzes a cyclopropane ring-opening reaction, the irreversible conversion of 1-aminocyclopropane-1-carboxylate (ACC) to ammonia and alpha-ketobutyrate. Allows growth on ACC as a nitrogen source. This chain is 1-aminocyclopropane-1-carboxylate deaminase, found in Burkholderia cenocepacia (strain ATCC BAA-245 / DSM 16553 / LMG 16656 / NCTC 13227 / J2315 / CF5610) (Burkholderia cepacia (strain J2315)).